A 533-amino-acid polypeptide reads, in one-letter code: 2-isopropylmalate synthase (533 aa).

The 262-residue stretch at 8-269 (IIIFDTTLRD…YYNPFLGRPA (262 aa)) folds into the Pyruvate carboxyltransferase domain. Residues Asp17, His208, His210, and Asn244 each contribute to the Mn(2+) site. Positions 408 to 533 (RLELVQVSCG…VSANPAKASL (126 aa)) are regulatory domain.

Belongs to the alpha-IPM synthase/homocitrate synthase family. LeuA type 1 subfamily. In terms of assembly, homodimer. It depends on Mn(2+) as a cofactor.

The protein resides in the cytoplasm. It catalyses the reaction 3-methyl-2-oxobutanoate + acetyl-CoA + H2O = (2S)-2-isopropylmalate + CoA + H(+). It functions in the pathway amino-acid biosynthesis; L-leucine biosynthesis; L-leucine from 3-methyl-2-oxobutanoate: step 1/4. Its function is as follows. Catalyzes the condensation of the acetyl group of acetyl-CoA with 3-methyl-2-oxobutanoate (2-ketoisovalerate) to form 3-carboxy-3-hydroxy-4-methylpentanoate (2-isopropylmalate). The protein is 2-isopropylmalate synthase of Picosynechococcus sp. (strain ATCC 27264 / PCC 7002 / PR-6) (Agmenellum quadruplicatum).